Reading from the N-terminus, the 342-residue chain is AA9 family lytic polysaccharide monooxygenase AA9-X282 (342 aa).

The signal sequence occupies residues 1–18; the sequence is MKSFASLLFLAATAAAHA. Histidine 17 provides a ligand contact to Cu(2+). Phosphothreonine is present on residues threonine 19 and threonine 57. Residue serine 59 is modified to Phosphoserine. Cysteine 63 and cysteine 181 are oxidised to a cystine. Residue histidine 93 coordinates Cu(2+). The O2 site is built by histidine 167 and glutamine 176. Residue tyrosine 178 participates in Cu(2+) binding. An N-linked (GlcNAc...) asparagine glycan is attached at asparagine 189. The segment at 233 to 263 is X282 extension; the sequence is SPATVANTPYPTTATWNTALQPTTVPTVTPP. The segment at 281 to 302 is disordered; sequence VTSQPPVPPTTQQPPVVTPTAP. A compositionally biased stretch (pro residues) spans 285–302; it reads PPVPPTTQQPPVVTPTAP. Positions 306–342 constitute a CBM1 domain; the sequence is PLQTQYGQCGGQGWNGPTQCQPPYTCTASNQWYHQCL.

It belongs to the polysaccharide monooxygenase AA9 family. Cu(2+) is required as a cofactor.

Its subcellular location is the secreted. The catalysed reaction is [(1-&gt;4)-beta-D-glucosyl]n+m + reduced acceptor + O2 = 4-dehydro-beta-D-glucosyl-[(1-&gt;4)-beta-D-glucosyl]n-1 + [(1-&gt;4)-beta-D-glucosyl]m + acceptor + H2O.. In terms of biological role, lytic polysaccharide monooxygenase (LPMO) that depolymerizes crystalline and amorphous polysaccharides via the oxidation of scissile alpha- or beta-(1-4)-glycosidic bonds, yielding C1 oxidation products. Catalysis by LPMOs requires the reduction of the active-site copper from Cu(II) to Cu(I) by a reducing agent and H(2)O(2) or O(2) as a cosubstrate. Shows only weak binding properties to cellulose, and low cellulolytic oxidative activity which questions the involvement of X282 extension-containing AA9 proteins in the degradation of plant cell wall and opens new avenues as to the divergence of function of some AA9 members. This is AA9 family lytic polysaccharide monooxygenase AA9-X282 from Coprinopsis cinerea (strain Okayama-7 / 130 / ATCC MYA-4618 / FGSC 9003) (Inky cap fungus).